The following is a 304-amino-acid chain: Oxygen-dependent coproporphyrinogen-III oxidase (304 aa).

Substrate is bound at residue Ser-94. A divalent metal cation-binding residues include His-98 and His-108. Catalysis depends on His-108, which acts as the Proton donor. Substrate is bound at residue 110–112 (NVR). The a divalent metal cation site is built by His-147 and His-177. The important for dimerization stretch occupies residues 242–277 (YVEFNLVYDRGTLFGLQTGGRTESILMSMPPLVRWQ). 260-262 (GGR) is a binding site for substrate.

This sequence belongs to the aerobic coproporphyrinogen-III oxidase family. In terms of assembly, homodimer. A divalent metal cation serves as cofactor.

The protein localises to the cytoplasm. It catalyses the reaction coproporphyrinogen III + O2 + 2 H(+) = protoporphyrinogen IX + 2 CO2 + 2 H2O. It functions in the pathway porphyrin-containing compound metabolism; protoporphyrin-IX biosynthesis; protoporphyrinogen-IX from coproporphyrinogen-III (O2 route): step 1/1. In terms of biological role, involved in the heme biosynthesis. Catalyzes the aerobic oxidative decarboxylation of propionate groups of rings A and B of coproporphyrinogen-III to yield the vinyl groups in protoporphyrinogen-IX. The chain is Oxygen-dependent coproporphyrinogen-III oxidase from Shewanella amazonensis (strain ATCC BAA-1098 / SB2B).